Consider the following 654-residue polypeptide: Sucrose:sucrose 1-fructosyltransferase (654 aa).

Residues 1 to 106 (MESSAVVPGT…VSEKASGAYS (106 aa)) constitute a propeptide that is removed on maturation. The N-linked (GlcNAc...) asparagine glycan is linked to Asn32. Asp136 is a catalytic residue. N-linked (GlcNAc...) asparagine glycans are attached at residues Asn328, Asn457, Asn491, Asn506, and Asn625.

It belongs to the glycosyl hydrolase 32 family. In terms of assembly, monomer. In terms of tissue distribution, accumulates at the base of growing leaves.

It localises to the vacuole. It catalyses the reaction 2 sucrose = 1(F)-beta-D-fructosylsucrose + D-glucose. Transferase involved in fructan biosynthesis that catalyzes the production of 1-kestose (fructose and nystose to a lower extent) from sucrose. Also exhibits some hydrolase activity toward 1-kestose, thus producing fructose and sucrose. A weak fructosyltransferase activity leads to the formation of nystose from 1-kestose. In Festuca arundinacea (Tall fescue), this protein is Sucrose:sucrose 1-fructosyltransferase (1-SST).